The sequence spans 764 residues: MTPQVDTVSAAAATPDVAQPYKELGLKDDEYARIKEILGRRPTDAELAMYSVMWSEHCSYKSSKVHLRYFGETTTEEMRKSMLAGIGENAGVVDVGDGWAVTFKVESHNHPSYVEPYQGAATGVGGIVRDIMAMGARPVAVMDQLRFGAADHPDTRRVVDGVVRGIGGYGNSLGLPNVGGETVFDASYQGNPLVNALCAGVMRVEDLHLAFASGTGNKIILFGARTGLDGIGGVSVLASDTFSGDESGAGRKKLPSVQVGDPFTEKVLIECCLELYAAKLVVGIQDLGGAGLSCATSELAAAGDGGMRIELDKVPLRAADMTPAEILSSESQERMCAVVTPENVEAFMAVCRKWDVLATVIGEVTDGDRLVVTWHGETVVDVPPRTVAHEGPVYERPVQRPDYQDALIADTPDTLPRPATADELRETLLRMISSPQLCSRKWITEQYDRYVRGNTVLAEDADAGVIRIDEQTGRGIALATDASGRYTKLDPYAGAQLALAEAFRNVASTGATPKAVTNCLNFGSPEDPGVMWQFQQAVRGLADGCVALGIPVTGGNVSFYNQTGQDAILPTPVVGVLGVIDDVHRRIPTGIGLEPGETLILLGDTRDEFGGSIWAQVVHDHLGGVPPKVDFAREQLLAEVLTAGSRDGMISAAHDLSEGGLAQAVVEAALAGETGCRILLPEDADPFVTLFSESAGRVLVAVPRSEETRFTRMCEARQLPWVRIGVVDQGSDALEVQGHFSIPLTELRAAFEGTLPKLFGAETA.

The active site involves histidine 57. ATP is bound by residues tyrosine 60 and lysine 104. Glutamate 106 contacts Mg(2+). Residues 107–110 (SHNH) and arginine 129 each bind substrate. Histidine 108 serves as the catalytic Proton acceptor. Position 130 (aspartate 130) interacts with Mg(2+). Glutamine 258 is a binding site for substrate. Position 286 (aspartate 286) interacts with Mg(2+). Residue 330–332 (ESQ) participates in substrate binding. ATP is bound by residues asparagine 518 and glycine 555. Mg(2+) is bound at residue asparagine 556. Substrate is bound at residue serine 558.

Belongs to the FGAMS family. In terms of assembly, monomer. Part of the FGAM synthase complex composed of 1 PurL, 1 PurQ and 2 PurS subunits.

It localises to the cytoplasm. The catalysed reaction is N(2)-formyl-N(1)-(5-phospho-beta-D-ribosyl)glycinamide + L-glutamine + ATP + H2O = 2-formamido-N(1)-(5-O-phospho-beta-D-ribosyl)acetamidine + L-glutamate + ADP + phosphate + H(+). The protein operates within purine metabolism; IMP biosynthesis via de novo pathway; 5-amino-1-(5-phospho-D-ribosyl)imidazole from N(2)-formyl-N(1)-(5-phospho-D-ribosyl)glycinamide: step 1/2. Functionally, part of the phosphoribosylformylglycinamidine synthase complex involved in the purines biosynthetic pathway. Catalyzes the ATP-dependent conversion of formylglycinamide ribonucleotide (FGAR) and glutamine to yield formylglycinamidine ribonucleotide (FGAM) and glutamate. The FGAM synthase complex is composed of three subunits. PurQ produces an ammonia molecule by converting glutamine to glutamate. PurL transfers the ammonia molecule to FGAR to form FGAM in an ATP-dependent manner. PurS interacts with PurQ and PurL and is thought to assist in the transfer of the ammonia molecule from PurQ to PurL. The polypeptide is Phosphoribosylformylglycinamidine synthase subunit PurL (Nocardia farcinica (strain IFM 10152)).